The following is a 59-amino-acid chain: Potassium channel toxin alpha-KTx 1.12 (59 aa).

Positions 1 to 22 (MKILSVLLLALIICSIVGWSEA) are cleaved as a signal peptide. Gln23 is subject to Pyrrolidone carboxylic acid. Cystine bridges form between Cys29–Cys50, Cys35–Cys55, and Cys39–Cys57. The segment at 48–55 (GKCMNKKC) is interaction with Ca(2+)-activated K(+) channels.

This sequence belongs to the short scorpion toxin superfamily. Potassium channel inhibitor family. Alpha-KTx 01 subfamily. As to expression, expressed by the venom gland.

The protein resides in the secreted. Functionally, potent selective inhibitor of high conductance (maxi-K), different medium and small conductance calcium-activated potassium channels (KCa1.1/KCNMA1 and others), as well as a voltage-dependent potassium channel (Kv1.3/KCNA3&gt;Kv1.2/KCNA2&gt;Kv1.6/KCNA3&gt;&gt;Shaker/Sh). It blocks channel activity by a simple bimolecular inhibition process. Its function is as follows. Has a pH-specific antimicrobial activity against bacteria (B.subtilis, E.coli and S.aureus) and the fungus C.albicans. The protein is Potassium channel toxin alpha-KTx 1.12 of Leiurus hebraeus (Hebrew deathstalker scorpion).